A 506-amino-acid polypeptide reads, in one-letter code: Galactose/methyl galactoside import ATP-binding protein MglA (506 aa).

ABC transporter domains follow at residues Leu14–Ser249 and Val264–Leu506. Gly46–Ser53 is a binding site for ATP.

This sequence belongs to the ABC transporter superfamily. Galactose/methyl galactoside importer (TC 3.A.1.2.3) family. As to quaternary structure, the complex is composed of one ATP-binding protein (MglA), two transmembrane proteins (MglC) and a solute-binding protein (MglB).

The protein resides in the cell inner membrane. It catalyses the reaction D-galactose(out) + ATP + H2O = D-galactose(in) + ADP + phosphate + H(+). The catalysed reaction is methyl beta-D-galactoside(out) + ATP + H2O = methyl beta-D-galactoside(in) + ADP + phosphate + H(+). Functionally, part of the ABC transporter complex MglABC involved in galactose/methyl galactoside import. Responsible for energy coupling to the transport system. The chain is Galactose/methyl galactoside import ATP-binding protein MglA from Sodalis glossinidius (strain morsitans).